A 262-amino-acid polypeptide reads, in one-letter code: Glutamate racemase (262 aa).

Residues 10–11 and 42–43 contribute to the substrate site; these read DS and FG. Cys74 functions as the Proton donor/acceptor in the catalytic mechanism. 75 to 76 contributes to the substrate binding site; that stretch reads NT. Cys189 serves as the catalytic Proton donor/acceptor. 190 to 191 contacts substrate; the sequence is TH.

It belongs to the aspartate/glutamate racemases family.

It carries out the reaction L-glutamate = D-glutamate. It participates in cell wall biogenesis; peptidoglycan biosynthesis. Its function is as follows. Provides the (R)-glutamate required for cell wall biosynthesis. This is Glutamate racemase from Mesorhizobium japonicum (strain LMG 29417 / CECT 9101 / MAFF 303099) (Mesorhizobium loti (strain MAFF 303099)).